The sequence spans 432 residues: 3-phosphoshikimate 1-carboxyvinyltransferase (432 aa).

3 residues coordinate 3-phosphoshikimate: K21, S22, and R26. Position 21 (K21) interacts with phosphoenolpyruvate. Residues G93 and R121 each coordinate phosphoenolpyruvate. 4 residues coordinate 3-phosphoshikimate: S166, Q168, D318, and K345. Q168 contacts phosphoenolpyruvate. Residue D318 is the Proton acceptor of the active site. Phosphoenolpyruvate is bound by residues R349 and R391.

It belongs to the EPSP synthase family. Monomer.

It localises to the cytoplasm. It catalyses the reaction 3-phosphoshikimate + phosphoenolpyruvate = 5-O-(1-carboxyvinyl)-3-phosphoshikimate + phosphate. The protein operates within metabolic intermediate biosynthesis; chorismate biosynthesis; chorismate from D-erythrose 4-phosphate and phosphoenolpyruvate: step 6/7. Functionally, catalyzes the transfer of the enolpyruvyl moiety of phosphoenolpyruvate (PEP) to the 5-hydroxyl of shikimate-3-phosphate (S3P) to produce enolpyruvyl shikimate-3-phosphate and inorganic phosphate. This Persephonella marina (strain DSM 14350 / EX-H1) protein is 3-phosphoshikimate 1-carboxyvinyltransferase.